The chain runs to 290 residues: 3-deoxy-manno-octulosonate cytidylyltransferase, mitochondrial (290 aa).

The N-terminal 50 residues, 1–50, are a transit peptide targeting the mitochondrion; the sequence is MSVCSSSSSSQKTWIVNGILAGTAIAAAIGARAYLGRSKKFRSRVVGIIP.

Belongs to the KdsB family. It depends on Mg(2+) as a cofactor. Expressed in roots, leaves, stems and siliques.

The protein resides in the mitochondrion outer membrane. The enzyme catalyses 3-deoxy-alpha-D-manno-oct-2-ulosonate + CTP = CMP-3-deoxy-beta-D-manno-octulosonate + diphosphate. The protein operates within nucleotide-sugar biosynthesis; CMP-3-deoxy-D-manno-octulosonate biosynthesis; CMP-3-deoxy-D-manno-octulosonate from 3-deoxy-D-manno-octulosonate and CTP: step 1/1. Inhibited by 2beta-deoxy-Kdo. Its function is as follows. Catalyzes the production of the sugar nucleotide CMP-3-deoxy-D-manno-octulosonate (CMP-KDO). CTP is the preferred nucleotide donor, but it can partially be replaced with UTP. Activates KDO during the biosynthesis of rhamnogalacturonan II (RG-II), a structurally complex pectic polysaccharide of the primary cell wall. RG-II is essential for the cell wall integrity of rapidly growing tissues and pollen tube growth and elongation. The polypeptide is 3-deoxy-manno-octulosonate cytidylyltransferase, mitochondrial (Arabidopsis thaliana (Mouse-ear cress)).